A 343-amino-acid polypeptide reads, in one-letter code: MAKRQLNRRQNWRIEKIQGERAARAAKRESRAVEALEGGDLGPEQTGLVIAHFGVQVEIEGLQGELAGQVFRCHLRANLPALVTGDQVVWRPGNQGDGVIVAQLPRSSELCRPDMRGQLKPVAANVDQIVIVFAPLPEPHANLIDRYLVAAEHAGIRPLLLLNKADLIDEQNQVALEALLKVYRQLGYPLLEVSAHQGDGMEQLKKRLDGHVSVFVGQSGVGKSSLVNGLLPGVDTRVGALSELTGKGTHTTTTARLFHFPGGGQLIDSPGIREFGLGHVSRDDVEAGFIEFHDLLGRCRFRDCKHDREPGCALLQALEDGRIQAQRMASYRHILASLPEDDY.

In terms of domain architecture, CP-type G spans Arg116 to Phe275. GTP-binding positions include Asn163–Asp166 and Gly217–Ser225. The Zn(2+) site is built by Cys299, Cys304, His306, and Cys312.

Belongs to the TRAFAC class YlqF/YawG GTPase family. RsgA subfamily. As to quaternary structure, monomer. Associates with 30S ribosomal subunit, binds 16S rRNA. Zn(2+) serves as cofactor.

The protein resides in the cytoplasm. In terms of biological role, one of several proteins that assist in the late maturation steps of the functional core of the 30S ribosomal subunit. Helps release RbfA from mature subunits. May play a role in the assembly of ribosomal proteins into the subunit. Circularly permuted GTPase that catalyzes slow GTP hydrolysis, GTPase activity is stimulated by the 30S ribosomal subunit. This chain is Small ribosomal subunit biogenesis GTPase RsgA, found in Ectopseudomonas mendocina (strain ymp) (Pseudomonas mendocina).